Reading from the N-terminus, the 1487-residue chain is Collagen alpha-1(II) chain (1487 aa).

Positions 1–25 (MIRLGAPQTLVLLTLLVAAVLRCQG) are cleaved as a signal peptide. Residues 26–181 (QDVQEAGSCV…PPGLGGNFAA (156 aa)) constitute a propeptide, N-terminal propeptide. One can recognise a VWFC domain in the interval 32-90 (GSCVQDGQRYNDKDVWKPEPCRICVCDTGTVLCDDIICEDVKDCLSPEIPFGECCPICP). Residues 97 to 1237 (SGQPGPKGQK…PREKGPDPLQ (1141 aa)) are disordered. Basic and acidic residues-rich tracts occupy residues 105–116 (QKGEPGDIKDIV) and 133–154 (PRGD…RDGE). The segment covering 158–173 (PGNPGPPGPPGPPGPP) has biased composition (pro residues). K190 carries the post-translational modification 5-hydroxylysine. Residue K190 is glycosylated (O-linked (Gal...) hydroxylysine). The triple-helical region stretch occupies residues 201-1214 (GPMGPMGPRG…PGPPGPPGPP (1014 aa)). Positions 208–217 (PRGPPGPAGA) are enriched in pro residues. The segment covering 218 to 239 (PGPQGFQGNPGEPGEPGVSGPM) has biased composition (low complexity). A compositionally biased stretch (pro residues) spans 241-250 (PRGPPGPPGK). Residues 251–265 (PGDDGEAGKPGKAGE) are compositionally biased toward basic and acidic residues. A 5-hydroxylysine mark is found at K287, K299, and K308. Residues K287, K299, and K308 are each glycosylated (O-linked (Gal...) hydroxylysine). Composition is skewed to low complexity over residues 310–320 (ESGSPGENGSP) and 335–350 (TGPA…DGQP). The segment covering 360 to 369 (GPAGGPGFPG) has biased composition (gly residues). Low complexity-rich tracts occupy residues 370 to 382 (APGA…PTGA) and 391 to 431 (PRGE…AGAP). The residue at position 374 (K374) is a 5-hydroxylysine. K374 carries an O-linked (Gal...) hydroxylysine glycan. The span at 433 to 442 (FPGPRGPPGP) shows a compositional bias: pro residues. K608 and K620 each carry 5-hydroxylysine. K608 and K620 each carry an O-linked (Gal...) hydroxylysine glycan. 2 stretches are compositionally biased toward low complexity: residues 622–631 (LPGAPGLRGL) and 656–667 (QGAPGPSGFQGL). P659 and P668 each carry 4-hydroxyproline. P670 bears the 3-hydroxyproline mark. A 4-hydroxyproline mark is found at P671 and P674. Positions 764 to 775 (KGDRGDVGEKGP) are enriched in basic and acidic residues. Composition is skewed to low complexity over residues 833–848 (AGFA…PGAK) and 877–913 (PTGV…SNGN). 3-hydroxyproline is present on P907. 3 positions are modified to 4-hydroxyproline: P908, P914, and P920. A compositionally biased stretch (pro residues) spans 1069–1079 (APGPPGSPGPA). Residues 1115-1129 (RGDKGEAGEPGERGL) are compositionally biased toward basic and acidic residues. K1130 carries the 5-hydroxylysine modification. A glycan (O-linked (Gal...) hydroxylysine) is linked at K1130. The residue at position 1144 (P1144) is a 3-hydroxyproline. Residues 1148–1157 (SGDQGASGPA) are compositionally biased toward low complexity. The residue at position 1181 (P1181) is a 4-hydroxyproline. P1186 is modified (3-hydroxyproline). 4-hydroxyproline is present on P1187. The span at 1199–1216 (AGPPGNPGPPGPPGPPGP) shows a compositional bias: pro residues. Residue P1201 is modified to 3-hydroxyproline. 4-hydroxyproline occurs at positions 1202 and 1205. Residue P1207 is modified to 3-hydroxyproline. P1208 and P1211 each carry 4-hydroxyproline. P1213 is subject to 3-hydroxyproline. P1214 carries the 4-hydroxyproline modification. Residues 1215–1241 (GPGIDMSAFAGLGPREKGPDPLQYMRA) are nonhelical region (C-terminal). A Fibrillar collagen NC1 domain is found at 1253–1487 (AEVDATLKSL…GVDIGPVCFL (235 aa)). 3 cysteine pairs are disulfide-bonded: C1283–C1315, C1323–C1485, and C1393–C1438. Positions 1301, 1303, 1304, 1306, and 1309 each coordinate Ca(2+). Residue N1388 is glycosylated (N-linked (GlcNAc...) asparagine).

This sequence belongs to the fibrillar collagen family. Homotrimers of alpha 1(II) chains. The N-telopeptide is covalently linked to the helical COL2 region of alpha 1(IX), alpha 2(IX) and alpha 3(IX) chain. The C-telopeptide is covalently linked to an another site in the helical region of alpha 3(IX) COL2. Post-translationally, contains mostly 4-hydroxyproline. Prolines at the third position of the tripeptide repeating unit (G-X-P) are 4-hydroxylated in some or all of the chains. In terms of processing, contains 3-hydroxyproline at a few sites. This modification occurs on the first proline residue in the sequence motif Gly-Pro-Hyp, where Hyp is 4-hydroxyproline. Lysine residues at the third position of the tripeptide repeating unit (G-X-Y) are 5-hydroxylated in some or all of the chains. Post-translationally, O-glycosylated on hydroxylated lysine residues. The O-linked glycan consists of a Glc-Gal disaccharide. As to expression, isoform 2 is highly expressed in juvenile chondrocyte and low in fetal chondrocyte.

It localises to the secreted. The protein localises to the extracellular space. Its subcellular location is the extracellular matrix. In terms of biological role, type II collagen is specific for cartilaginous tissues. It is essential for the normal embryonic development of the skeleton, for linear growth and for the ability of cartilage to resist compressive forces. This chain is Collagen alpha-1(II) chain, found in Homo sapiens (Human).